We begin with the raw amino-acid sequence, 206 residues long: Transcription elongation factor A protein-like 5 (206 aa).

The span at M1–D26 shows a compositional bias: basic and acidic residues. Residues M1 to V206 form a disordered region. Acidic residues predominate over residues E27–P42. Residues D43–D56 are compositionally biased toward basic and acidic residues. A compositionally biased stretch (acidic residues) spans E57–G70. Basic and acidic residues-rich tracts occupy residues N71–S86, A102–P113, D121–R160, and G196–V206.

Belongs to the TFS-II family. TFA subfamily.

The protein resides in the nucleus. May be involved in transcriptional regulation. The sequence is that of Transcription elongation factor A protein-like 5 (TCEAL5) from Homo sapiens (Human).